Reading from the N-terminus, the 193-residue chain is Xanthine phosphoribosyltransferase (193 aa).

Xanthine contacts are provided by leucine 20 and threonine 27. 128–132 (ANGQA) is a 5-phospho-alpha-D-ribose 1-diphosphate binding site. Lysine 156 contributes to the xanthine binding site.

This sequence belongs to the purine/pyrimidine phosphoribosyltransferase family. Xpt subfamily. As to quaternary structure, homodimer.

The protein resides in the cytoplasm. It carries out the reaction XMP + diphosphate = xanthine + 5-phospho-alpha-D-ribose 1-diphosphate. It participates in purine metabolism; XMP biosynthesis via salvage pathway; XMP from xanthine: step 1/1. Its function is as follows. Converts the preformed base xanthine, a product of nucleic acid breakdown, to xanthosine 5'-monophosphate (XMP), so it can be reused for RNA or DNA synthesis. The protein is Xanthine phosphoribosyltransferase of Streptococcus equi subsp. equi (strain 4047).